Here is a 76-residue protein sequence, read N- to C-terminus: Small ribosomal subunit protein eS17 (76 aa).

The protein belongs to the eukaryotic ribosomal protein eS17 family.

In Picrophilus torridus (strain ATCC 700027 / DSM 9790 / JCM 10055 / NBRC 100828 / KAW 2/3), this protein is Small ribosomal subunit protein eS17.